The primary structure comprises 125 residues: Cystatin-like cysteine protease inhibitor EPIC2B (125 aa).

An N-terminal signal peptide occupies residues 1–21; it reads MSFLRPTLALLAVTALVTTSA. N-linked (GlcNAc...) asparagine glycosylation occurs at Asn45. The Secondary area of contact signature appears at 68–72; the sequence is QVVSG.

This sequence belongs to the cystatin family. Interacts with the host papain-like cysteine protease PIP1. Interacts with the host papain-like cysteine protease RCR3. Interacts with the host papain-like cysteine protease C14.

It localises to the secreted. Functionally, secreted effector that interacts with and inhibits the pathogenesis-related papain-like cysteine proteases C14, PIP1 and RCR3 of host plants. Inhibition of host proteases by a pathogen extracellular protease inhibitor forms a specific type of defense-counterdefense mechanism between plants and microbial pathogens. In Phytophthora infestans (strain T30-4) (Potato late blight agent), this protein is Cystatin-like cysteine protease inhibitor EPIC2B.